The chain runs to 426 residues: Dihydroorotase (426 aa).

Positions 55 and 57 each coordinate Zn(2+). Residues 57 to 59 (HLR) and N89 each bind substrate. Zn(2+) is bound by residues D147, H174, H233, and D306. D306 is an active-site residue. Substrate-binding positions include H310 and 324-325 (FG).

It belongs to the metallo-dependent hydrolases superfamily. DHOase family. Class I DHOase subfamily. Zn(2+) serves as cofactor.

The catalysed reaction is (S)-dihydroorotate + H2O = N-carbamoyl-L-aspartate + H(+). It participates in pyrimidine metabolism; UMP biosynthesis via de novo pathway; (S)-dihydroorotate from bicarbonate: step 3/3. In terms of biological role, catalyzes the reversible cyclization of carbamoyl aspartate to dihydroorotate. The sequence is that of Dihydroorotase from Thermus aquaticus.